The primary structure comprises 63 residues: Hyphancin-3F (63 aa).

The N-terminal stretch at 1–22 is a signal peptide; that stretch reads MNFSRILFFVFACFVALASVSA. A propeptide spans 23–26 (removed by a dipeptidylpeptidase); it reads APEP. Leucine 61 is subject to Leucine amide.

This sequence belongs to the cecropin family.

It is found in the secreted. Its function is as follows. Has antibacterial activity. The sequence is that of Hyphancin-3F from Hyphantria cunea (Fall webworm moth).